The chain runs to 187 residues: Transcriptional repressor NrdR (187 aa).

A zinc finger lies at 3 to 34 (CPFCRHPDSRVVDSRTTDDGTSIRRRRQCPDC). An ATP-cone domain is found at 46 to 136 (LMVVKRSGVT…VYRAFDSLED (91 aa)). Residues 146-187 (EEQRERPAVDDEDHEDAGAERQGTDRGSGGTVEVPVPATVAD) form a disordered region.

It belongs to the NrdR family. Zn(2+) serves as cofactor.

Functionally, negatively regulates transcription of bacterial ribonucleotide reductase nrd genes and operons by binding to NrdR-boxes. This chain is Transcriptional repressor NrdR, found in Streptomyces avermitilis (strain ATCC 31267 / DSM 46492 / JCM 5070 / NBRC 14893 / NCIMB 12804 / NRRL 8165 / MA-4680).